Consider the following 624-residue polypeptide: Kelch-like ECH-associated protein 1 (624 aa).

The tract at residues 1–27 (MQPEPRPSGAGAHTQFLPLRSQRPEGA) is disordered. S-(2-succinyl)cysteine is present on Cys38. A BTB domain is found at 77 to 149 (CDVTLQVKYE…AYTASISMGE (73 aa)). Arg135 is covalently cross-linked (N5-[4-(S-L-cysteinyl)-5-methyl-1H-imidazol-2-yl]-L-ornithine (Arg-Cys) (interchain with C-151 in KEAP1)). S-(2-succinyl)cysteine occurs at positions 151 and 241. Cys151 is modified (S-(2,3-dicarboxypropyl)cysteine; alternate). Cys151 carries the post-translational modification S-nitrosocysteine; alternate. Cys151 is covalently cross-linked (N5-[4-(S-L-cysteinyl)-5-methyl-1H-imidazol-2-yl]-L-ornithine (Cys-Arg) (interchain with R-135 in KEAP1)). The BACK domain maps to 184–286 (AIGIANFAEQ…TPHFLQMQLQ (103 aa)). An S-(2,3-dicarboxypropyl)cysteine mark is found at Cys257 and Cys273. 2 positions are modified to S-(2-succinyl)cysteine: Cys288 and Cys319. An S-(2,3-dicarboxypropyl)cysteine; alternate modification is found at Cys288. Kelch repeat units lie at residues 327–372 (LIYT…VVGG), 373–423 (LLYA…VIDG), 424–470 (HIYA…VLNR), 471–517 (LLYA…VLHN), 519–564 (IYAA…VHQG), and 565–611 (RIYV…VTME). The residue at position 434 (Cys434) is an S-cGMP-cysteine. Cys613 is subject to S-(2-succinyl)cysteine.

This sequence belongs to the KEAP1 family. Component of the BCR(KEAP1) E3 ubiquitin ligase complex, at least composed of 2 molecules of CUL3, 2 molecules of KEAP1, and RBX1. Interacts with NFE2L2/NRF2; the interaction is direct. Forms a ternary complex with NFE2L2/NRF2 and PGAM5. Interacts with (phosphorylated) SQSTM1/p62; the interaction is direct and inactivates the BCR(KEAP1) complex by sequestering it in inclusion bodies, promoting its degradation. Interacts with NFE2L1. Interacts with BPTF and PTMA. Interacts with MAP1LC3B. Interacts indirectly with ENC1. Interacts with SESN1 and SESN2. Interacts with HSP90AA1 and HSP90AB1. Interacts with PGCKA1; this interaction prevents the ubiquitination of KEAP1 by TRIM25, thus protecting KEAP1 protein from degradation. Non-enzymatic covalent modifications of reactive cysteines by electrophile metabolites inactivate the BCR(KEAP1) complex. Accumulation of fumarate promotes the formation of cysteine S-succination (S-(2-succinyl)cysteine), leading to inactivate the BCR(KEAP1) complex and promote NFE2L2/NRF2 nuclear accumulation and activation. Nitric oxide-dependent 8-Nitro-cGMP formation promotes cysteine guanylation (S-cGMP-cysteine), leading to NFE2L2/NRF2 nuclear accumulation and activation. Itaconate, an anti-inflammatory metabolite generated in response to lipopolysaccharide, alkylates cysteines, activating NFE2L2/NRF2. Methylglyoxal, a reactive metabolite that accumulates when the glycolytic enzyme PGK1 is inhibited, promotes formation of a methylimidazole cross-link between proximal Cys-151 and Arg-135 on another KEAP1 molecule, resulting in an inactive dimer that inactivates the BCR(KEAP1) complex. Post-translationally, degraded via a proteasomal-independent process during selective autophagy: interaction with phosphorylated SQSTM1/p62 sequesters KEAP1 in inclusion bodies, leading to its degradation. In terms of processing, auto-ubiquitinated by the BCR(KEAP1) complex. Quinone-induced oxidative stress, but not sulforaphane, increases its ubiquitination. Ubiquitination and subsequent degradation is most pronounced following prolonged exposure of cells to oxidative stress, particularly in glutathione-deficient cells that are highly susceptible to oxidative stress. Deubiquitinated by USP25; leading to stabilization. Ubiquitinated by TRIM25; leading to degradation upon ER stress.

The protein localises to the cytoplasm. The protein resides in the nucleus. It functions in the pathway protein modification; protein ubiquitination. Its activity is regulated as follows. Ubiquitin ligase activity of the BCR(KEAP1) complex is inhibited by oxidative stress and electrophile metabolites such as sulforaphane. Electrophile metabolites react with reactive cysteine residues in KEAP1 and trigger non-enzymatic covalent modifications of these cysteine residues, leading to inactivate the ubiquitin ligase activity of the BCR(KEAP1) complex. Selective autophagy also inactivates the BCR(KEAP1) complex via interaction between KEAP1 and SQSTM1/p62, which sequesters the complex in inclusion bodies and promotes its degradation. Functionally, substrate-specific adapter of a BCR (BTB-CUL3-RBX1) E3 ubiquitin ligase complex that regulates the response to oxidative stress by targeting NFE2L2/NRF2 for ubiquitination. KEAP1 acts as a key sensor of oxidative and electrophilic stress: in normal conditions, the BCR(KEAP1) complex mediates ubiquitination and degradation of NFE2L2/NRF2, a transcription factor regulating expression of many cytoprotective genes. In response to oxidative stress, different electrophile metabolites trigger non-enzymatic covalent modifications of highly reactive cysteine residues in KEAP1, leading to inactivate the ubiquitin ligase activity of the BCR(KEAP1) complex, promoting NFE2L2/NRF2 nuclear accumulation and expression of phase II detoxifying enzymes. In response to selective autophagy, KEAP1 is sequestered in inclusion bodies following its interaction with SQSTM1/p62, leading to inactivation of the BCR(KEAP1) complex and activation of NFE2L2/NRF2. The BCR(KEAP1) complex also mediates ubiquitination of SQSTM1/p62, increasing SQSTM1/p62 sequestering activity and degradation. The BCR(KEAP1) complex also targets BPTF and PGAM5 for ubiquitination and degradation by the proteasome. The protein is Kelch-like ECH-associated protein 1 of Sus scrofa (Pig).